The following is a 697-amino-acid chain: Potassium-transporting ATPase ATP-binding subunit (697 aa).

Transmembrane regions (helical) follow at residues proline 55 to serine 75, serine 79 to alanine 99, leucine 245 to phenylalanine 265, and valine 271 to isoleucine 291. The active-site 4-aspartylphosphate intermediate is aspartate 324. Residues aspartate 361, glutamate 365, phenylalanine 393–serine 400, and lysine 412 contribute to the ATP site. Aspartate 535 and aspartate 539 together coordinate Mg(2+). The next 3 membrane-spanning stretches (helical) occupy residues phenylalanine 605 to methionine 625, alanine 633 to methionine 653, and glycine 677 to isoleucine 697.

This sequence belongs to the cation transport ATPase (P-type) (TC 3.A.3) family. Type IA subfamily. The system is composed of three essential subunits: KdpA, KdpB and KdpC.

The protein localises to the cell membrane. The enzyme catalyses K(+)(out) + ATP + H2O = K(+)(in) + ADP + phosphate + H(+). Functionally, part of the high-affinity ATP-driven potassium transport (or Kdp) system, which catalyzes the hydrolysis of ATP coupled with the electrogenic transport of potassium into the cytoplasm. This subunit is responsible for energy coupling to the transport system and for the release of the potassium ions to the cytoplasm. This is Potassium-transporting ATPase ATP-binding subunit from Bacillus cereus (strain AH820).